Here is a 514-residue protein sequence, read N- to C-terminus: Contact site A protein (514 aa).

An N-terminal signal peptide occupies residues 1 to 19 (MKFLLVLIILYNILNSAHS). The segment at 20-453 (APTITAVSNG…EATTSTTYTI (434 aa)) is globular. The region spanning 21–104 (PTITAVSNGK…TGGNGLFKYT (84 aa)) is the IPT/TIG 1 domain. Asparagine 128, asparagine 137, asparagine 207, asparagine 294, and asparagine 399 each carry an N-linked (GlcNAc...) asparagine glycan. One can recognise an IPT/TIG 2 domain in the interval 191-283 (PTITSITPLA…NQQPITFTYN (93 aa)). 2 stretches are compositionally biased toward low complexity: residues 446–475 (TTST…TATP) and 483–494 (STPEETEAPSSA). Positions 446-494 (TTSTTYTIPDTPTPTDTATPSPTPTETATPSPTPKPTSTPEETEAPSSA) are disordered. 2 repeat units span residues 462-469 (TATPSPTP) and 472-479 (TATPSPTP). Positions 462–479 (TATPSPTPTETATPSPTP) are 2 X 8 AA repeats, Pro-rich. Serine 492 is lipidated: GPI-like-anchor amidated serine. A propeptide spans 493–514 (SATTLISPLSLIVIFISFVLLI) (removed in mature form).

Post-translationally, phosphorylated on serine and N-glycosylated with two types of oligosaccharide chains. The GPI-like-anchor contains a phosphoceramide group, rather than a phosphatidyl group.

It is found in the cell membrane. In terms of biological role, this cell-surface glycoprotein mediates cell-cell binding via homophilic interaction. The sequence is that of Contact site A protein (csaA) from Dictyostelium discoideum (Social amoeba).